The sequence spans 499 residues: Glycerol kinase (499 aa).

T17 is a binding site for ADP. 3 residues coordinate ATP: T17, T18, and S19. Position 17 (T17) interacts with sn-glycerol 3-phosphate. Residue R21 coordinates ADP. Positions 87, 88, 139, and 243 each coordinate sn-glycerol 3-phosphate. R87, E88, Y139, D243, and Q244 together coordinate glycerol. ADP is bound by residues T265 and G308. Positions 265, 308, 312, and 409 each coordinate ATP. ADP is bound by residues G409 and N413.

Belongs to the FGGY kinase family.

It carries out the reaction glycerol + ATP = sn-glycerol 3-phosphate + ADP + H(+). It participates in polyol metabolism; glycerol degradation via glycerol kinase pathway; sn-glycerol 3-phosphate from glycerol: step 1/1. Its activity is regulated as follows. Inhibited by fructose 1,6-bisphosphate (FBP). Its function is as follows. Key enzyme in the regulation of glycerol uptake and metabolism. Catalyzes the phosphorylation of glycerol to yield sn-glycerol 3-phosphate. The sequence is that of Glycerol kinase from Pseudomonas putida (strain GB-1).